The following is a 269-amino-acid chain: uncharacterized protein (269 aa).

The segment at residues 3–105 (WIINDNIEFW…VPRRGFKIHN (103 aa)) is a DNA-binding region (ompR/PhoB-type).

To V.cholerae cholera toxin transcriptional activator (ToxR).

This is an uncharacterized protein from Escherichia coli (strain K12).